A 51-amino-acid polypeptide reads, in one-letter code: Epididymal sperm protein E (51 aa).

A zinc finger spans residues 8–39; that stretch reads CVRCRRKTPSFNSKTVTFRNKRRAIRSHCAYC.

As to expression, sperm.

The protein localises to the nucleus. The polypeptide is Epididymal sperm protein E (Sepia officinalis (Common cuttlefish)).